The sequence spans 80 residues: Sulfur carrier protein TusA (80 aa).

The active-site Cysteine persulfide intermediate is the Cys17.

The protein belongs to the sulfur carrier protein TusA family.

The protein resides in the cytoplasm. Sulfur carrier protein which probably makes part of a sulfur-relay system. The protein is Sulfur carrier protein TusA of Pseudomonas putida (strain W619).